A 395-amino-acid chain; its full sequence is Scyllo-inosose 3-dehydrogenase (395 aa).

C66 lines the Zn(2+) pocket. Residues S68 and H71 each act as charge relay system in the active site. H95, E96, C131, C134, C137, C145, and E193 together coordinate Zn(2+). I223, E243, and R248 together coordinate NAD(+).

Belongs to the zinc-containing alcohol dehydrogenase family. Homodimer. It depends on Zn(2+) as a cofactor.

It catalyses the reaction scyllo-inosose + NAD(+) = 3-dehydro-scyllo-inosose + NADH + H(+). Its pathway is polyol metabolism; myo-inositol metabolism. Catalyzes the NAD(+)-dependent oxidation of scyllo-inosose (2-keto-myo-inositol) to 3-dehydro-scyllo-inosose (diketo-inositol), and thus probably functions in a myo-inositol degradation pathway together with IolG, IolN and IolO. Has no activity on myo-inositol, D-chiro-inositol and 1-keto-D-chiro-inositol. This is Scyllo-inosose 3-dehydrogenase from Thermotoga maritima (strain ATCC 43589 / DSM 3109 / JCM 10099 / NBRC 100826 / MSB8).